Reading from the N-terminus, the 148-residue chain is Sec-independent protein translocase protein TatB (148 aa).

The helical transmembrane segment at Met-1 to Gly-21 threads the bilayer. The interval Glu-85–Pro-148 is disordered. Low complexity predominate over residues Ala-107–Pro-148.

It belongs to the TatB family. As to quaternary structure, the Tat system comprises two distinct complexes: a TatABC complex, containing multiple copies of TatA, TatB and TatC subunits, and a separate TatA complex, containing only TatA subunits. Substrates initially bind to the TatABC complex, which probably triggers association of the separate TatA complex to form the active translocon.

The protein resides in the cell inner membrane. Functionally, part of the twin-arginine translocation (Tat) system that transports large folded proteins containing a characteristic twin-arginine motif in their signal peptide across membranes. Together with TatC, TatB is part of a receptor directly interacting with Tat signal peptides. TatB may form an oligomeric binding site that transiently accommodates folded Tat precursor proteins before their translocation. In Pseudomonas fluorescens (strain Pf0-1), this protein is Sec-independent protein translocase protein TatB.